Reading from the N-terminus, the 315-residue chain is 4-hydroxy-3-methylbut-2-enyl diphosphate reductase (315 aa).

Residue Cys12 coordinates [4Fe-4S] cluster. Residues His41 and His74 each contribute to the (2E)-4-hydroxy-3-methylbut-2-enyl diphosphate site. His41 and His74 together coordinate dimethylallyl diphosphate. The isopentenyl diphosphate site is built by His41 and His74. Position 96 (Cys96) interacts with [4Fe-4S] cluster. His124 lines the (2E)-4-hydroxy-3-methylbut-2-enyl diphosphate pocket. His124 provides a ligand contact to dimethylallyl diphosphate. His124 lines the isopentenyl diphosphate pocket. The Proton donor role is filled by Glu126. Thr168 lines the (2E)-4-hydroxy-3-methylbut-2-enyl diphosphate pocket. Cys198 provides a ligand contact to [4Fe-4S] cluster. Ser226, Ser227, Asn228, and Ser270 together coordinate (2E)-4-hydroxy-3-methylbut-2-enyl diphosphate. Dimethylallyl diphosphate-binding residues include Ser226, Ser227, Asn228, and Ser270. Residues Ser226, Ser227, Asn228, and Ser270 each coordinate isopentenyl diphosphate.

The protein belongs to the IspH family. [4Fe-4S] cluster serves as cofactor.

It carries out the reaction isopentenyl diphosphate + 2 oxidized [2Fe-2S]-[ferredoxin] + H2O = (2E)-4-hydroxy-3-methylbut-2-enyl diphosphate + 2 reduced [2Fe-2S]-[ferredoxin] + 2 H(+). It catalyses the reaction dimethylallyl diphosphate + 2 oxidized [2Fe-2S]-[ferredoxin] + H2O = (2E)-4-hydroxy-3-methylbut-2-enyl diphosphate + 2 reduced [2Fe-2S]-[ferredoxin] + 2 H(+). It participates in isoprenoid biosynthesis; dimethylallyl diphosphate biosynthesis; dimethylallyl diphosphate from (2E)-4-hydroxy-3-methylbutenyl diphosphate: step 1/1. The protein operates within isoprenoid biosynthesis; isopentenyl diphosphate biosynthesis via DXP pathway; isopentenyl diphosphate from 1-deoxy-D-xylulose 5-phosphate: step 6/6. Functionally, catalyzes the conversion of 1-hydroxy-2-methyl-2-(E)-butenyl 4-diphosphate (HMBPP) into a mixture of isopentenyl diphosphate (IPP) and dimethylallyl diphosphate (DMAPP). Acts in the terminal step of the DOXP/MEP pathway for isoprenoid precursor biosynthesis. The polypeptide is 4-hydroxy-3-methylbut-2-enyl diphosphate reductase (Pseudomonas putida (strain ATCC 700007 / DSM 6899 / JCM 31910 / BCRC 17059 / LMG 24140 / F1)).